We begin with the raw amino-acid sequence, 436 residues long: MSLPTVAIVGRPNVGKSTIFNRIAGERISIVEDIPGVTRDRIYATGEWLTRKFNIIDTGGIELSDEPFMTEIRAQAEIAMTEADVIIAVVDGETGITDADEAVANILYRTDKPVILVVNKVDNPERRMEIFDFYSLGLGDPYPVSAVHGIGTGDVLDAIVQNLPNEIEEENENVIKFSLIGRPNVGKSSLINAILGEDRVIASPIAGTTRDAIDTHFVDSEDQEFVMIDTAGMRKSGKIYENTEKYSVMRAMRAIDRSDIVLMVINAEEGIREYDMRIAGFAHEAGKGILIVVNKWDTLEKDNDTMKNFELEIRTKFKFLDYAPIVYVSAKTGQRLNKLPDMIKEIHHAQNLRISSSVLNDVIMDAVAINPTPTDKGKRLKIFYATQVAIKPPTFVVFVNEEELMHFSYLRFLENQIRKAFVFEGTPVHLIARKRK.

EngA-type G domains follow at residues 4–167 (PTVA…PNEI) and 175–351 (IKFS…HAQN). GTP contacts are provided by residues 10–17 (GRPNVGKS), 57–61 (DTGGI), 119–122 (NKVD), 181–188 (GRPNVGKS), 229–233 (DTAGM), and 294–297 (NKWD). Residues 352 to 436 (LRISSSVLND…PVHLIARKRK (85 aa)) form the KH-like domain.

Belongs to the TRAFAC class TrmE-Era-EngA-EngB-Septin-like GTPase superfamily. EngA (Der) GTPase family. As to quaternary structure, associates with the 50S ribosomal subunit.

Its function is as follows. GTPase that plays an essential role in the late steps of ribosome biogenesis. The sequence is that of GTPase Der from Lactococcus lactis subsp. lactis (strain IL1403) (Streptococcus lactis).